The primary structure comprises 260 residues: Acetylglutamate kinase (260 aa).

Substrate-binding positions include 46–47 (GG), R68, and N160.

Belongs to the acetylglutamate kinase family. ArgB subfamily.

It localises to the cytoplasm. The enzyme catalyses N-acetyl-L-glutamate + ATP = N-acetyl-L-glutamyl 5-phosphate + ADP. Its pathway is amino-acid biosynthesis; L-arginine biosynthesis; N(2)-acetyl-L-ornithine from L-glutamate: step 2/4. Functionally, catalyzes the ATP-dependent phosphorylation of N-acetyl-L-glutamate. The sequence is that of Acetylglutamate kinase from Shewanella oneidensis (strain ATCC 700550 / JCM 31522 / CIP 106686 / LMG 19005 / NCIMB 14063 / MR-1).